The chain runs to 90 residues: Bombyxin B-5 (90 aa).

Positions 1–20 (MMKTAVMFILVVVISLTYSS) are cleaved as a signal peptide. Cystine bridges form between C30/C75, C42/C88, and C74/C79. Positions 49-64 (GGAQYAPYWQETYLRS) are cleaved as a propeptide — c peptide like.

This sequence belongs to the insulin family. Heterodimer of a B chain and an A chain linked by two disulfide bonds.

Its subcellular location is the secreted. Brain peptide responsible for activation of prothoracic glands to produce ecdysone in insects. The sequence is that of Bombyxin B-5 (BBXB5) from Bombyx mori (Silk moth).